The primary structure comprises 216 residues: 4-hydroxy-tetrahydrodipicolinate reductase (216 aa).

NAD(+) is bound by residues 7–12 (GYSGRM), 71–73 (GTT), and 95–98 (AYNF). Catalysis depends on His-127, which acts as the Proton donor/acceptor. His-128 is a (S)-2,3,4,5-tetrahydrodipicolinate binding site. The Proton donor role is filled by Lys-131. 137–138 (GT) provides a ligand contact to (S)-2,3,4,5-tetrahydrodipicolinate.

Belongs to the DapB family.

It is found in the cytoplasm. The enzyme catalyses (S)-2,3,4,5-tetrahydrodipicolinate + NAD(+) + H2O = (2S,4S)-4-hydroxy-2,3,4,5-tetrahydrodipicolinate + NADH + H(+). It carries out the reaction (S)-2,3,4,5-tetrahydrodipicolinate + NADP(+) + H2O = (2S,4S)-4-hydroxy-2,3,4,5-tetrahydrodipicolinate + NADPH + H(+). It participates in amino-acid biosynthesis; L-lysine biosynthesis via DAP pathway; (S)-tetrahydrodipicolinate from L-aspartate: step 4/4. Functionally, catalyzes the conversion of 4-hydroxy-tetrahydrodipicolinate (HTPA) to tetrahydrodipicolinate. This is 4-hydroxy-tetrahydrodipicolinate reductase from Thermotoga sp. (strain RQ2).